A 640-amino-acid chain; its full sequence is Threonine--tRNA ligase (640 aa).

One can recognise a TGS domain in the interval 1–61 (MPIITLPNGD…TEDSTLQIIT (61 aa)). The interval 242-533 (DHRKIGKALD…LIEHYAGFMP (292 aa)) is catalytic. The Zn(2+) site is built by Cys-333, His-384, and His-510.

The protein belongs to the class-II aminoacyl-tRNA synthetase family. Homodimer. It depends on Zn(2+) as a cofactor.

The protein localises to the cytoplasm. It catalyses the reaction tRNA(Thr) + L-threonine + ATP = L-threonyl-tRNA(Thr) + AMP + diphosphate + H(+). Its function is as follows. Catalyzes the attachment of threonine to tRNA(Thr) in a two-step reaction: L-threonine is first activated by ATP to form Thr-AMP and then transferred to the acceptor end of tRNA(Thr). Also edits incorrectly charged L-seryl-tRNA(Thr). This chain is Threonine--tRNA ligase, found in Acinetobacter baumannii (strain SDF).